The chain runs to 518 residues: Kelch repeat and BTB domain-containing protein 4 (518 aa).

The region spanning 45–112 (ADVTISVEGR…IYHGTVKLRA (68 aa)) is the BTB domain. One can recognise a BACK domain in the interval 147–239 (CLQVMWLADR…SLKEIGENVH (93 aa)). Kelch repeat units follow at residues 239-285 (HIYL…KHGG), 286-328 (DLYV…SVPG), 331-378 (AIYS…NLNG), 380-430 (IYLL…VHKD), and 432-481 (VFIV…VFRD).

Component of the BCR(KBTBD4) E3 ubiquitin ligase complex, at least composed of CUL3, KBTBD4 and RBX1.

In terms of biological role, substrate-specific adapter of a BCR (BTB-CUL3-RBX1) E3 ubiquitin ligase complex which targets CoREST corepressor complex components RCOR1, KDM1A/LSD1 and HDAC2 for proteasomal degradation. RCOR1 is likely to be the primary target while degradation of KDM1A and HDAC2 is likely due to their association with RCOR1. Also targets RCOR3, MIER2 and MIER3 for proteasomal degradation as well as associated proteins ZNF217 and RREB1. Degradation is dependent on the presence of an ELM2 domain in the target proteins. The protein is Kelch repeat and BTB domain-containing protein 4 (KBTBD4) of Pongo abelii (Sumatran orangutan).